Reading from the N-terminus, the 337-residue chain is Glyceraldehyde-3-phosphate dehydrogenase 3, cytosolic (337 aa).

The binding to NAD stretch occupies residues 1–151 (MAKIKIGING…YKSDINIVSN (151 aa)). NAD(+) is bound by residues 13 to 14 (RI), aspartate 35, and arginine 82. The tract at residues 152 to 337 (ASCTTNCLAP…DLIRHMNSTK (186 aa)) is catalytic. Residues 153-155 (SCT), threonine 184, 213-214 (TG), and arginine 236 each bind D-glyceraldehyde 3-phosphate. Cysteine 154 acts as the Nucleophile in catalysis. Asparagine 318 is a binding site for NAD(+).

It belongs to the glyceraldehyde-3-phosphate dehydrogenase family. Homotetramer.

It is found in the cytoplasm. The catalysed reaction is D-glyceraldehyde 3-phosphate + phosphate + NAD(+) = (2R)-3-phospho-glyceroyl phosphate + NADH + H(+). It participates in carbohydrate degradation; glycolysis; pyruvate from D-glyceraldehyde 3-phosphate: step 1/5. Functionally, key enzyme in glycolysis that catalyzes the first step of the pathway by converting D-glyceraldehyde 3-phosphate (G3P) into 3-phospho-D-glyceroyl phosphate. Essential for the maintenance of cellular ATP levels and carbohydrate metabolism. This is Glyceraldehyde-3-phosphate dehydrogenase 3, cytosolic (GAPC3) from Zea mays (Maize).